We begin with the raw amino-acid sequence, 109 residues long: MFGKGGLGNLMKQAQQMQDRMQKMQEEIAQLEVTGESGAGLVKITINGAHNCRRVEIDPSLMEDDKDMLEDLIAAAFNDAVRRAEELQKEKMASVTAGMALPPGFKMPF.

The protein belongs to the YbaB/EbfC family. Homodimer.

The protein localises to the cytoplasm. It is found in the nucleoid. Functionally, binds to DNA and alters its conformation. May be involved in regulation of gene expression, nucleoid organization and DNA protection. In Pasteurella multocida (strain Pm70), this protein is Nucleoid-associated protein PM0205.